Reading from the N-terminus, the 345-residue chain is Aurora kinase B (345 aa).

The segment at 1–25 is disordered; the sequence is MAQKENAYPWPYGSKTSQSGLNTLS. The segment covering 14–25 has biased composition (polar residues); the sequence is SKTSQSGLNTLS. Position 35 is a phosphothreonine (Thr-35). Residues 50-77 form a disordered region; sequence TAAPGQKLAENKSQGSTASQGSQNKQPF. A compositionally biased stretch (polar residues) spans 60–77; the sequence is NKSQGSTASQGSQNKQPF. At Ser-62 the chain carries Phosphoserine. The 251-residue stretch at 82–332 folds into the Protein kinase domain; that stretch reads FEIGRPLGKG…LAEVAAHPWV (251 aa). ATP is bound by residues 88–96 and Lys-111; that span reads LGKGKFGNV. The Proton acceptor role is filled by Asp-205. An N6-acetyllysine modification is found at Lys-220. At Ser-232 the chain carries Phosphoserine. At Thr-237 the chain carries Phosphothreonine; by autocatalysis.

It belongs to the protein kinase superfamily. Ser/Thr protein kinase family. Aurora subfamily. Component of the chromosomal passenger complex (CPC) composed of at least BIRC5/survivin, CDCA8/borealin, INCENP, AURKB or AURKC; predominantly independent AURKB- and AURKC-containing complexes exist. Associates with RACGAP1 during M phase. Interacts with SPDYC; this interaction may be required for proper localization of active, Thr-237-phosphorylated AURKB form during prometaphase and metaphase. Interacts with p53/TP53. Interacts (via the middle kinase domain) with NOC2L (via the N- and C-terminus domains). Interacts with CDCA1. Interacts with EVI5. Interacts with JTB. Interacts with NDC80. Interacts with PSMA3. Interacts with RNF2/RING1B. Interacts with SEPTIN1. Interacts with SIRT2. Interacts with TACC1. Interacts with TTC28. In terms of processing, the phosphorylation of Thr-237 requires the binding to INCENP and occurs by means of an autophosphorylation mechanism. Thr-237 phosphorylation is indispensable for the AURKB kinase activity. Post-translationally, acetylated at Lys-220 by KAT5 at kinetochores, increasing AURKB activity and promoting accurate chromosome segregation in mitosis. Ubiquitinated by different BCR (BTB-CUL3-RBX1) E3 ubiquitin ligase complexes. Ubiquitinated by the BCR(KLHL9-KLHL13) E3 ubiquitin ligase complex, ubiquitination leads to removal from mitotic chromosomes and is required for cytokinesis. During anaphase, the BCR(KLHL21) E3 ubiquitin ligase complex recruits the CPC complex from chromosomes to the spindle midzone and mediates the ubiquitination of AURKB. Ubiquitination of AURKB by BCR(KLHL21) E3 ubiquitin ligase complex may not lead to its degradation by the proteasome. Deubiquitinated by USP35; inhibiting CDH1-mediated degradation of AURKB. In terms of tissue distribution, expressed in testis, intestine and spleen. All of them are tissues that contain a large number of proliferating cells. Expressed during S phase, in a cell-cycle-dependent fashion.

Its subcellular location is the nucleus. The protein localises to the chromosome. It is found in the centromere. It localises to the kinetochore. The protein resides in the cytoplasm. Its subcellular location is the cytoskeleton. The protein localises to the spindle. It is found in the midbody. It catalyses the reaction L-seryl-[protein] + ATP = O-phospho-L-seryl-[protein] + ADP + H(+). The catalysed reaction is L-threonyl-[protein] + ATP = O-phospho-L-threonyl-[protein] + ADP + H(+). With respect to regulation, activity is greatly increased when AURKB is within the CPC complex. In particular, AURKB-phosphorylated INCENP acts as an activator of AURKB. Positive feedback between HASPIN and AURKB contributes to CPC localization. Its function is as follows. Serine/threonine-protein kinase component of the chromosomal passenger complex (CPC), a complex that acts as a key regulator of mitosis. The CPC complex has essential functions at the centromere in ensuring correct chromosome alignment and segregation and is required for chromatin-induced microtubule stabilization and spindle assembly. Involved in the bipolar attachment of spindle microtubules to kinetochores and is a key regulator for the onset of cytokinesis during mitosis. Required for central/midzone spindle assembly and cleavage furrow formation. Key component of the cytokinesis checkpoint, a process required to delay abscission to prevent both premature resolution of intercellular chromosome bridges and accumulation of DNA damage: phosphorylates CHMP4C, leading to retain abscission-competent VPS4 (VPS4A and/or VPS4B) at the midbody ring until abscission checkpoint signaling is terminated at late cytokinesis. AURKB phosphorylates the CPC complex subunits BIRC5/survivin, CDCA8/borealin and INCENP. Phosphorylation of INCENP leads to increased AURKB activity. Other known AURKB substrates involved in centromeric functions and mitosis are CENPA, DES/desmin, GPAF, KIF2C, NSUN2, RACGAP1, SEPTIN1, VIM/vimentin, HASPIN, and histone H3. A positive feedback loop involving HASPIN and AURKB contributes to localization of CPC to centromeres. Phosphorylation of VIM controls vimentin filament segregation in cytokinetic process, whereas histone H3 is phosphorylated at 'Ser-10' and 'Ser-28' during mitosis (H3S10ph and H3S28ph, respectively). AURKB is also required for kinetochore localization of BUB1 and SGO1. Phosphorylation of p53/TP53 negatively regulates its transcriptional activity. Key regulator of active promoters in resting B- and T-lymphocytes: acts by mediating phosphorylation of H3S28ph at active promoters in resting B-cells, inhibiting RNF2/RING1B-mediated ubiquitination of histone H2A and enhancing binding and activity of the USP16 deubiquitinase at transcribed genes. Acts as an inhibitor of CGAS during mitosis: catalyzes phosphorylation of the N-terminus of CGAS during the G2-M transition, blocking CGAS liquid phase separation and activation, and thereby preventing CGAS-induced autoimmunity. Phosphorylates KRT5 during anaphase and telophase. Phosphorylates ATXN10 which promotes phosphorylation of ATXN10 by PLK1 and may play a role in the regulation of cytokinesis and stimulating the proteasomal degradation of ATXN10. The sequence is that of Aurora kinase B (Aurkb) from Mus musculus (Mouse).